A 1119-amino-acid polypeptide reads, in one-letter code: Ubiquitin-associated protein 2 (1119 aa).

Residues 1–26 (MMTSVSSDHCRGAREKPQISAAQSTQ) form a disordered region. Over residues 8–17 (DHCRGAREKP) the composition is skewed to basic and acidic residues. Residues 48–92 (KNDSDFEAKVKQLMEVTGKNQDECIVALHDCNGDVNKAINILLEG) form the UBA domain. The stretch at 105–130 (KKKNFAKENSENKENREKKSEKESSR) forms a coiled coil. The segment covering 110–130 (AKENSENKENREKKSEKESSR) has biased composition (basic and acidic residues). Disordered stretches follow at residues 110-202 (AKEN…YSDS), 385-476 (LGQF…SPST), 622-736 (VHNR…SSHQ), 853-905 (RDGS…VNPA), 937-966 (SAKQHGVNLSTPTPPFQQASGYGQHGYSTG), 982-1020 (GGYAGSSQAPNKSAGSGPGKGVSVSSSTTGLPDMTGSVY), and 1082-1119 (HLPQDAQSGSGQRSQPSSLQPKSQASKPAYGNSPYWTN). Arg166 carries the omega-N-methylarginine modification. The span at 168 to 182 (KRARGRGFGRGRGRG) shows a compositional bias: basic residues. Over residues 389–407 (TTTPSTQQNSTSHPTTTTS) the composition is skewed to low complexity. Phosphoserine occurs at positions 432, 439, 473, and 630. Residues 435 to 447 (LSQLSQRQQHQSQ) show a composition bias toward low complexity. Over residues 651-662 (SQQTLDTPKTTG) the composition is skewed to polar residues. Residues 663–678 (PPSALPSVSSLPSTTS) show a composition bias toward low complexity. Polar residues predominate over residues 679-694 (CTALLPSTSQHTGDLT). 2 stretches are compositionally biased toward low complexity: residues 695-736 (SSPL…SSHQ) and 874-900 (SASPAPATTPAQPQQSQSQTHHTAQQP). The span at 943–957 (VNLSTPTPPFQQASG) shows a compositional bias: polar residues. Low complexity-rich tracts occupy residues 1002 to 1011 (GVSVSSSTTG) and 1088 to 1102 (QSGSGQRSQPSSLQP).

As to quaternary structure, may interact with ANXA2.

It localises to the nucleus. It is found in the chromosome. The protein resides in the cytoplasm. Its function is as follows. Recruits the ubiquitination machinery to RNA polymerase II for polyubiquitination, removal and degradation, when the transcription-coupled nucleotide excision repair (TC-NER) machinery fails to resolve DNA damage. May promote the degradation of ANXA2. The polypeptide is Ubiquitin-associated protein 2 (Homo sapiens (Human)).